A 32-amino-acid polypeptide reads, in one-letter code: MSSISDTQVYIALVVALIPGLLAWRLATELYK.

A helical membrane pass occupies residues 9-28; it reads VYIALVVALIPGLLAWRLAT.

The protein belongs to the PsaM family.

It localises to the cellular thylakoid membrane. This Nostoc sp. (strain PCC 7120 / SAG 25.82 / UTEX 2576) protein is Photosystem I reaction center subunit XII.